We begin with the raw amino-acid sequence, 528 residues long: Lysine--tRNA ligase (528 aa).

A 'HIGH' region motif is present at residues 44-52 (PSGLPHIGT). The 'KMSKS' region signature appears at 290–294 (KISKS). Lys293 serves as a coordination point for ATP.

Belongs to the class-I aminoacyl-tRNA synthetase family.

It is found in the cytoplasm. The enzyme catalyses tRNA(Lys) + L-lysine + ATP = L-lysyl-tRNA(Lys) + AMP + diphosphate. The chain is Lysine--tRNA ligase (lysS) from Rickettsia prowazekii (strain Madrid E).